We begin with the raw amino-acid sequence, 663 residues long: Nuclear receptor-binding protein homolog (663 aa).

Residues 1-14 (MSNSQANAGSSGSA) are compositionally biased toward low complexity. The interval 1 to 112 (MSNSQANAGS…SEDESEILEE (112 aa)) is disordered. Positions 19–46 (LNPSGSATLVPNLTTTNASSQATPASTI) are enriched in polar residues. Low complexity-rich tracts occupy residues 47-57 (PQQQQPQQSQP) and 81-94 (VVVAGGSEGVNLDS). Residues 101-111 (DDSEDESEILE) are compositionally biased toward acidic residues. A Protein kinase domain is found at 122–392 (REEVDQRDVP…ANDLLFHPLL (271 aa)). Disordered regions lie at residues 481–505 (PNFRSRAASPERADSVKSATPEPVD) and 638–663 (YVPQDQQQYQQQQQEADVDQSGTTSN). 3 positions are modified to phosphoserine: serine 489, serine 495, and serine 498. Position 500 is a phosphothreonine (threonine 500). A compositionally biased stretch (low complexity) spans 641 to 652 (QDQQQYQQQQQE).

This sequence belongs to the protein kinase superfamily. Ser/Thr protein kinase family.

The protein resides in the cytoplasm. It localises to the cell cortex. Functionally, may play a role in subcellular trafficking between the endoplasmic reticulum and Golgi apparatus. In Drosophila pseudoobscura pseudoobscura (Fruit fly), this protein is Nuclear receptor-binding protein homolog.